Reading from the N-terminus, the 311-residue chain is tRNA-cytidine(32) 2-sulfurtransferase (311 aa).

The PP-loop motif motif lies at 47 to 52 (SGGKDS). Cysteine 122, cysteine 125, and cysteine 213 together coordinate [4Fe-4S] cluster.

It belongs to the TtcA family. Homodimer. It depends on Mg(2+) as a cofactor. The cofactor is [4Fe-4S] cluster.

It localises to the cytoplasm. It catalyses the reaction cytidine(32) in tRNA + S-sulfanyl-L-cysteinyl-[cysteine desulfurase] + AH2 + ATP = 2-thiocytidine(32) in tRNA + L-cysteinyl-[cysteine desulfurase] + A + AMP + diphosphate + H(+). Its pathway is tRNA modification. Catalyzes the ATP-dependent 2-thiolation of cytidine in position 32 of tRNA, to form 2-thiocytidine (s(2)C32). The sulfur atoms are provided by the cysteine/cysteine desulfurase (IscS) system. This is tRNA-cytidine(32) 2-sulfurtransferase from Pectobacterium atrosepticum (strain SCRI 1043 / ATCC BAA-672) (Erwinia carotovora subsp. atroseptica).